Reading from the N-terminus, the 430-residue chain is Adenylosuccinate synthetase (430 aa).

Residues 12 to 18 (GDEGKGK) and 40 to 42 (GHT) each bind GTP. The active-site Proton acceptor is D13. Residues D13 and G40 each contribute to the Mg(2+) site. IMP contacts are provided by residues 13–16 (DEGK), 38–41 (NAGH), T130, R144, Q224, and T239. H41 acts as the Proton donor in catalysis. Residues 277–297 (PFPTEQDNETGRKIGERGREF) form a disordered region. Positions 285–296 (ETGRKIGERGRE) are enriched in basic and acidic residues. 299–305 (TNTGRPR) is a substrate binding site. R303 is a binding site for IMP. GTP is bound by residues R305, 331–333 (KLD), and 413–415 (STS).

Belongs to the adenylosuccinate synthetase family. As to quaternary structure, homodimer. It depends on Mg(2+) as a cofactor.

It is found in the cytoplasm. The enzyme catalyses IMP + L-aspartate + GTP = N(6)-(1,2-dicarboxyethyl)-AMP + GDP + phosphate + 2 H(+). Its pathway is purine metabolism; AMP biosynthesis via de novo pathway; AMP from IMP: step 1/2. Plays an important role in the de novo pathway of purine nucleotide biosynthesis. Catalyzes the first committed step in the biosynthesis of AMP from IMP. The protein is Adenylosuccinate synthetase of Bradyrhizobium sp. (strain ORS 278).